The primary structure comprises 89 residues: Small ribosomal subunit protein uS14A (89 aa).

This sequence belongs to the universal ribosomal protein uS14 family. As to quaternary structure, part of the 30S ribosomal subunit. Contacts proteins S3 and S10.

Binds 16S rRNA, required for the assembly of 30S particles and may also be responsible for determining the conformation of the 16S rRNA at the A site. The sequence is that of Small ribosomal subunit protein uS14A from Listeria monocytogenes serotype 4b (strain F2365).